Consider the following 401-residue polypeptide: Argininosuccinate synthase (401 aa).

9–17 (AYSGGLDTS) contributes to the ATP binding site. Tyr86 lines the L-citrulline pocket. Gly116 contributes to the ATP binding site. 3 residues coordinate L-aspartate: Thr118, Asn122, and Asp123. Position 122 (Asn122) interacts with L-citrulline. L-citrulline contacts are provided by Arg126, Ser174, Ser183, Glu259, and Tyr271.

It belongs to the argininosuccinate synthase family. Type 1 subfamily. Homotetramer.

The protein resides in the cytoplasm. The catalysed reaction is L-citrulline + L-aspartate + ATP = 2-(N(omega)-L-arginino)succinate + AMP + diphosphate + H(+). It functions in the pathway amino-acid biosynthesis; L-arginine biosynthesis; L-arginine from L-ornithine and carbamoyl phosphate: step 2/3. The polypeptide is Argininosuccinate synthase (Bacillus cereus (strain AH187)).